The primary structure comprises 647 residues: DNA mismatch repair protein MutL (647 aa).

The interval Gln-346–Pro-378 is disordered.

Belongs to the DNA mismatch repair MutL/HexB family.

Its function is as follows. This protein is involved in the repair of mismatches in DNA. It is required for dam-dependent methyl-directed DNA mismatch repair. May act as a 'molecular matchmaker', a protein that promotes the formation of a stable complex between two or more DNA-binding proteins in an ATP-dependent manner without itself being part of a final effector complex. The chain is DNA mismatch repair protein MutL from Limosilactobacillus fermentum (strain NBRC 3956 / LMG 18251) (Lactobacillus fermentum).